We begin with the raw amino-acid sequence, 211 residues long: Probable nicotinate-nucleotide adenylyltransferase (211 aa).

This sequence belongs to the NadD family.

It catalyses the reaction nicotinate beta-D-ribonucleotide + ATP + H(+) = deamido-NAD(+) + diphosphate. It participates in cofactor biosynthesis; NAD(+) biosynthesis; deamido-NAD(+) from nicotinate D-ribonucleotide: step 1/1. Catalyzes the reversible adenylation of nicotinate mononucleotide (NaMN) to nicotinic acid adenine dinucleotide (NaAD). In Desulfotalea psychrophila (strain LSv54 / DSM 12343), this protein is Probable nicotinate-nucleotide adenylyltransferase.